The chain runs to 295 residues: Methionine aminopeptidase (295 aa).

Position 62 (histidine 62) interacts with substrate. The a divalent metal cation site is built by aspartate 82, aspartate 93, and histidine 153. Histidine 161 serves as a coordination point for substrate. Positions 187 and 280 each coordinate a divalent metal cation.

Belongs to the peptidase M24A family. Methionine aminopeptidase archaeal type 2 subfamily. In terms of assembly, monomer. The cofactor is Co(2+). It depends on Zn(2+) as a cofactor. Mn(2+) is required as a cofactor. Requires Fe(2+) as cofactor.

The enzyme catalyses Release of N-terminal amino acids, preferentially methionine, from peptides and arylamides.. Removes the N-terminal methionine from nascent proteins. The N-terminal methionine is often cleaved when the second residue in the primary sequence is small and uncharged (Met-Ala-, Cys, Gly, Pro, Ser, Thr, or Val). This Pyrococcus abyssi (strain GE5 / Orsay) protein is Methionine aminopeptidase.